Here is a 578-residue protein sequence, read N- to C-terminus: Zinc finger protein 248 (578 aa).

The KRAB domain occupies 8-78; it reads VSFKDVCVDF…LEKGFPSQDP (71 aa). The C2H2-type 1; degenerate zinc finger occupies 239 to 263; the sequence is TVCKYNECGRTFIESLKLNISQRPH. A Glycyl lysine isopeptide (Lys-Gly) (interchain with G-Cter in SUMO2) cross-link involves residue Lys-340. C2H2-type zinc fingers lie at residues 379 to 401, 407 to 429, 435 to 457, 463 to 485, 491 to 513, 519 to 542, and 547 to 569; these read FECG…QRTH, YECT…QRTH, YECK…QRTH, YECN…QRTH, FICN…QRTH, YKCN…RTHT, and YECN…QRIH.

It belongs to the krueppel C2H2-type zinc-finger protein family.

The protein resides in the nucleus. Its function is as follows. May be involved in transcriptional regulation. The sequence is that of Zinc finger protein 248 (ZNF248) from Pongo abelii (Sumatran orangutan).